Here is a 496-residue protein sequence, read N- to C-terminus: DEAD-box ATP-dependent RNA helicase 38 (496 aa).

A disordered region spans residues 1–91 (MADTVEKVPT…SGDTPYTSAS (91 aa)). A2 is modified (N-acetylalanine). A compositionally biased stretch (low complexity) spans 7–25 (KVPTVVESSSSSTVEASNS). The span at 27–40 (EKTEPTTEKKKWGD) shows a compositional bias: basic and acidic residues. The span at 41-51 (VEDDDDEEEAV) shows a compositional bias: acidic residues. Residues 78 to 91 (KAVTSGDTPYTSAS) show a composition bias toward polar residues. The Q motif signature appears at 91 to 120 (SRFEDLNLSPELMKGLYVEMKFEKPSKIQA). Residues 125-301 (MIMTPPHKHL…ARTVKDPNQL (177 aa)) enclose the Helicase ATP-binding domain. Residue 138-145 (AHNGSGKT) coordinates ATP. The short motif at 245 to 248 (DEAD) is the DEAD box element. The Helicase C-terminal domain maps to 329 to 483 (VIKDQIMELG…EIKSWNSEEE (155 aa)).

It belongs to the DEAD box helicase family. DDX19/DBP5 subfamily. As to quaternary structure, interacts with NUP214 (via N-terminus). As to expression, constitutively expressed.

Its subcellular location is the cytoplasm. The protein resides in the nucleus. The catalysed reaction is ATP + H2O = ADP + phosphate + H(+). Its function is as follows. ATP-dependent RNA helicase essential for mRNA export from the nucleus. Plays an important role in the positive regulation of CBF/DREB transcription factors. The chain is DEAD-box ATP-dependent RNA helicase 38 (RH38) from Arabidopsis thaliana (Mouse-ear cress).